The chain runs to 336 residues: Holliday junction branch migration complex subunit RuvB (336 aa).

A large ATPase domain (RuvB-L) region spans residues 4–184; that stretch reads SDRLISSQSI…FGIVQRLEYY (181 aa). ATP is bound by residues Ile23, Arg24, Gly65, Lys68, Thr69, Thr70, 131-133, Arg174, Tyr184, and Arg221; that span reads EDY. Thr69 serves as a coordination point for Mg(2+). The interval 185-255 is small ATPAse domain (RuvB-S); sequence SVDSLTKIVA…MAQQALEMLE (71 aa). The segment at 258–336 is head domain (RuvB-H); sequence QHGFDLMDRK…HFGFSAIEQE (79 aa). The DNA site is built by Arg313 and Arg318.

The protein belongs to the RuvB family. As to quaternary structure, homohexamer. Forms an RuvA(8)-RuvB(12)-Holliday junction (HJ) complex. HJ DNA is sandwiched between 2 RuvA tetramers; dsDNA enters through RuvA and exits via RuvB. An RuvB hexamer assembles on each DNA strand where it exits the tetramer. Each RuvB hexamer is contacted by two RuvA subunits (via domain III) on 2 adjacent RuvB subunits; this complex drives branch migration. In the full resolvosome a probable DNA-RuvA(4)-RuvB(12)-RuvC(2) complex forms which resolves the HJ.

The protein localises to the cytoplasm. It catalyses the reaction ATP + H2O = ADP + phosphate + H(+). In terms of biological role, the RuvA-RuvB-RuvC complex processes Holliday junction (HJ) DNA during genetic recombination and DNA repair, while the RuvA-RuvB complex plays an important role in the rescue of blocked DNA replication forks via replication fork reversal (RFR). RuvA specifically binds to HJ cruciform DNA, conferring on it an open structure. The RuvB hexamer acts as an ATP-dependent pump, pulling dsDNA into and through the RuvAB complex. RuvB forms 2 homohexamers on either side of HJ DNA bound by 1 or 2 RuvA tetramers; 4 subunits per hexamer contact DNA at a time. Coordinated motions by a converter formed by DNA-disengaged RuvB subunits stimulates ATP hydrolysis and nucleotide exchange. Immobilization of the converter enables RuvB to convert the ATP-contained energy into a lever motion, pulling 2 nucleotides of DNA out of the RuvA tetramer per ATP hydrolyzed, thus driving DNA branch migration. The RuvB motors rotate together with the DNA substrate, which together with the progressing nucleotide cycle form the mechanistic basis for DNA recombination by continuous HJ branch migration. Branch migration allows RuvC to scan DNA until it finds its consensus sequence, where it cleaves and resolves cruciform DNA. The protein is Holliday junction branch migration complex subunit RuvB of Legionella pneumophila (strain Paris).